We begin with the raw amino-acid sequence, 554 residues long: Malate synthase 1 (554 aa).

R177 functions as the Proton acceptor in the catalytic mechanism. The active-site Proton donor is the D457. An SKL peroxisome targeting motif motif is present at residues 552–554 (SKL).

This sequence belongs to the malate synthase family. In terms of assembly, interacts with PEX9.

The protein resides in the peroxisome matrix. It catalyses the reaction glyoxylate + acetyl-CoA + H2O = (S)-malate + CoA + H(+). It functions in the pathway carbohydrate metabolism; glyoxylate cycle; (S)-malate from isocitrate: step 2/2. Functionally, malate synthase which takes part in the glyoxylate cycle. MLS1 activity is essential for cells to grow on oleic acid as a sole carbon source. Two steps of the glyoxylate cycle take place in the cytosol, the splitting of isocitrate into succinate and glyoxylate, and the dehydrogenation of malate to oxaloacetate. However, the formation of malate from glyoxylate and acetyl-CoA undertaken MLS1, occurs in the peroxisomes when cells are grown on oleic acid. The source of acetyl-CoA being either peroxisomal when breaking down fatty acids, or cytosolic when extra-cellular two-carbon substrates are used, therefore, although not strictly essential, the peroxisomal localization of MLS1 appears to be advantageous for cells growing on oleic acid, in that acetyl-CoA production and utilization are thereby intimately compartmentalized together to increase efficiency. The chain is Malate synthase 1 from Saccharomyces cerevisiae (strain ATCC 204508 / S288c) (Baker's yeast).